Consider the following 341-residue polypeptide: Paired box protein Pax-9 (341 aa).

The segment at residues 4 to 130 (AFGEVNQLGG…SSISRILRNK (127 aa)) is a DNA-binding region (paired). Residues 7-63 (EVNQLGGVFVNGRPLPNAIRLRIVELAQLGIRPCDISRQLRVSHGCVSKILARYNET) are PAI subdomain. The RED subdomain stretch occupies residues 82–130 (TVVKHIRTYKQRDPGIFAWEIRDRLLADGVCDKYNVPSVSSISRILRNK). The segment at 168–189 (AAAAKVPTPPGVPAIPGSVAMP) is interaction with KDM5B.

Interacts with KDM5B.

Its subcellular location is the nucleus. Transcription factor required for normal development of thymus, parathyroid glands, ultimobranchial bodies, teeth, skeletal elements of skull and larynx as well as distal limbs. The chain is Paired box protein Pax-9 (PAX9) from Homo sapiens (Human).